A 397-amino-acid chain; its full sequence is Probable sugar efflux transporter (397 aa).

12 helical membrane passes run 15-35, 50-70, 81-101, 103-123, 136-156, 169-189, 209-229, 246-266, 275-295, 301-321, 333-353, and 364-384; these read VVTLAIAAFIFNTTEFVPVGL, VGIMLTIYAWVVALMSLPFML, LICLFVLFIASHVLSFLAWNF, VLVISRIGIAFAHAVFWSITA, AQALSLIATGTALAMVLGLPI, TFFAIGIGALITLVCLIKLLP, PALMSIYLLTVVVVTAHYTAY, FATVLLLILGGAGIIGSVVFG, PLISIAIMLLVICLMLLLPAA, LAVLSIFWGIAIMVIGLGMQV, VAMALFSGIFNIGIGAGALVG, and TIGYVGAVPALAALVWSIIIF.

This sequence belongs to the major facilitator superfamily. SotB (TC 2.A.1.2) family.

It localises to the cell inner membrane. Involved in the efflux of sugars. The physiological role may be the reduction of the intracellular concentration of toxic sugars or sugar metabolites. This is Probable sugar efflux transporter from Citrobacter koseri (strain ATCC BAA-895 / CDC 4225-83 / SGSC4696).